The sequence spans 119 residues: Ribonuclease P protein component (119 aa).

It belongs to the RnpA family. As to quaternary structure, consists of a catalytic RNA component (M1 or rnpB) and a protein subunit.

It catalyses the reaction Endonucleolytic cleavage of RNA, removing 5'-extranucleotides from tRNA precursor.. Its function is as follows. RNaseP catalyzes the removal of the 5'-leader sequence from pre-tRNA to produce the mature 5'-terminus. It can also cleave other RNA substrates such as 4.5S RNA. The protein component plays an auxiliary but essential role in vivo by binding to the 5'-leader sequence and broadening the substrate specificity of the ribozyme. The sequence is that of Ribonuclease P protein component from Aeromonas salmonicida (strain A449).